Reading from the N-terminus, the 87-residue chain is MKTNLKELLEFPTSFTYKVMGLAQPELVDQVVEVVQRHAPGDYSPEVKPSSKGNYHSVSITINATHIEQVETLYEELGNIEIVRMVL.

The protein belongs to the UPF0250 family.

The polypeptide is UPF0250 protein ETA_23570 (Erwinia tasmaniensis (strain DSM 17950 / CFBP 7177 / CIP 109463 / NCPPB 4357 / Et1/99)).